A 468-amino-acid chain; its full sequence is Probable Xaa-Pro aminopeptidase pepP (468 aa).

Aspartate 264, aspartate 275, glutamate 398, and glutamate 438 together coordinate Mn(2+).

Belongs to the peptidase M24B family. Requires Mn(2+) as cofactor.

It catalyses the reaction Release of any N-terminal amino acid, including proline, that is linked to proline, even from a dipeptide or tripeptide.. Its function is as follows. Catalyzes the removal of a penultimate prolyl residue from the N-termini of peptides. This is Probable Xaa-Pro aminopeptidase pepP (pepP) from Talaromyces stipitatus (strain ATCC 10500 / CBS 375.48 / QM 6759 / NRRL 1006) (Penicillium stipitatum).